A 405-amino-acid polypeptide reads, in one-letter code: Arginine deiminase (405 aa).

The active-site Amidino-cysteine intermediate is the cysteine 395.

The protein belongs to the arginine deiminase family.

The protein localises to the cytoplasm. The catalysed reaction is L-arginine + H2O = L-citrulline + NH4(+). Its pathway is amino-acid degradation; L-arginine degradation via ADI pathway; carbamoyl phosphate from L-arginine: step 1/2. The chain is Arginine deiminase from Rhodococcus opacus (strain B4).